Reading from the N-terminus, the 232-residue chain is Phosphatidylserine decarboxylase proenzyme (232 aa).

The active-site Schiff-base intermediate with substrate; via pyruvic acid is Ser-190. Ser-190 is modified (pyruvic acid (Ser); by autocatalysis).

It belongs to the phosphatidylserine decarboxylase family. PSD-A subfamily. In terms of assembly, heterodimer of a large membrane-associated beta subunit and a small pyruvoyl-containing alpha subunit. Pyruvate serves as cofactor. In terms of processing, is synthesized initially as an inactive proenzyme. Formation of the active enzyme involves a self-maturation process in which the active site pyruvoyl group is generated from an internal serine residue via an autocatalytic post-translational modification. Two non-identical subunits are generated from the proenzyme in this reaction, and the pyruvate is formed at the N-terminus of the alpha chain, which is derived from the carboxyl end of the proenzyme. The post-translation cleavage follows an unusual pathway, termed non-hydrolytic serinolysis, in which the side chain hydroxyl group of the serine supplies its oxygen atom to form the C-terminus of the beta chain, while the remainder of the serine residue undergoes an oxidative deamination to produce ammonia and the pyruvoyl prosthetic group on the alpha chain.

Its subcellular location is the cell membrane. The catalysed reaction is a 1,2-diacyl-sn-glycero-3-phospho-L-serine + H(+) = a 1,2-diacyl-sn-glycero-3-phosphoethanolamine + CO2. The protein operates within phospholipid metabolism; phosphatidylethanolamine biosynthesis; phosphatidylethanolamine from CDP-diacylglycerol: step 2/2. Its function is as follows. Catalyzes the formation of phosphatidylethanolamine (PtdEtn) from phosphatidylserine (PtdSer). This chain is Phosphatidylserine decarboxylase proenzyme, found in Bradyrhizobium sp. (strain BTAi1 / ATCC BAA-1182).